A 426-amino-acid chain; its full sequence is Enolase (426 aa).

Gln-163 is a (2R)-2-phosphoglycerate binding site. The active-site Proton donor is the Glu-205. Mg(2+) is bound by residues Asp-242, Glu-283, and Asp-310. (2R)-2-phosphoglycerate-binding residues include Lys-335, Arg-364, Ser-365, and Lys-386. Lys-335 serves as the catalytic Proton acceptor.

Belongs to the enolase family. Mg(2+) serves as cofactor.

It is found in the cytoplasm. The protein resides in the secreted. Its subcellular location is the cell surface. It carries out the reaction (2R)-2-phosphoglycerate = phosphoenolpyruvate + H2O. The protein operates within carbohydrate degradation; glycolysis; pyruvate from D-glyceraldehyde 3-phosphate: step 4/5. Catalyzes the reversible conversion of 2-phosphoglycerate (2-PG) into phosphoenolpyruvate (PEP). It is essential for the degradation of carbohydrates via glycolysis. The sequence is that of Enolase from Pseudarthrobacter chlorophenolicus (strain ATCC 700700 / DSM 12829 / CIP 107037 / JCM 12360 / KCTC 9906 / NCIMB 13794 / A6) (Arthrobacter chlorophenolicus).